The chain runs to 65 residues: Small ribosomal subunit protein bS21 (65 aa).

A compositionally biased stretch (basic and acidic residues) spans R33–S42. Residues R33–N65 are disordered. Positions V43 to K58 are enriched in basic residues.

It belongs to the bacterial ribosomal protein bS21 family.

The polypeptide is Small ribosomal subunit protein bS21 (Herpetosiphon aurantiacus (strain ATCC 23779 / DSM 785 / 114-95)).